The chain runs to 149 residues: Deoxyuridine 5'-triphosphate nucleotidohydrolase (149 aa).

Residues 68–70, asparagine 81, 85–87, and lysine 95 contribute to the substrate site; these read RSG and TVD.

This sequence belongs to the dUTPase family. It depends on Mg(2+) as a cofactor.

It catalyses the reaction dUTP + H2O = dUMP + diphosphate + H(+). It functions in the pathway pyrimidine metabolism; dUMP biosynthesis; dUMP from dCTP (dUTP route): step 2/2. Functionally, this enzyme is involved in nucleotide metabolism: it produces dUMP, the immediate precursor of thymidine nucleotides and it decreases the intracellular concentration of dUTP so that uracil cannot be incorporated into DNA. The sequence is that of Deoxyuridine 5'-triphosphate nucleotidohydrolase from Neorickettsia sennetsu (strain ATCC VR-367 / Miyayama) (Ehrlichia sennetsu).